The sequence spans 186 residues: Adenine phosphoribosyltransferase (186 aa).

It belongs to the purine/pyrimidine phosphoribosyltransferase family. Homodimer.

The protein resides in the cytoplasm. The enzyme catalyses AMP + diphosphate = 5-phospho-alpha-D-ribose 1-diphosphate + adenine. It functions in the pathway purine metabolism; AMP biosynthesis via salvage pathway; AMP from adenine: step 1/1. Catalyzes a salvage reaction resulting in the formation of AMP, that is energically less costly than de novo synthesis. The sequence is that of Adenine phosphoribosyltransferase from Xanthomonas oryzae pv. oryzae (strain MAFF 311018).